Here is a 501-residue protein sequence, read N- to C-terminus: Aldehyde dehydrogenase family 2 member C4 (501 aa).

245-250 (GSTDVG) contributes to the NAD(+) binding site. The Proton acceptor role is filled by Glu-268. Cys-302 (nucleophile) is an active-site residue.

This sequence belongs to the aldehyde dehydrogenase family. As to quaternary structure, homotetramer.

The protein resides in the cytoplasm. The protein localises to the cytosol. It carries out the reaction an aldehyde + NAD(+) + H2O = a carboxylate + NADH + 2 H(+). Its function is as follows. Involved in ferulic acid and sinapic acid biosynthesis by oxidation of conyferylaldehyde and sinapaldehyde, respectively. Can oxidize L-lactaldehyde. Possesses activity on acetaldehyde and glycolaldehyde in vitro. In Arabidopsis thaliana (Mouse-ear cress), this protein is Aldehyde dehydrogenase family 2 member C4 (ALDH2C4).